The chain runs to 302 residues: Putative peptide permease protein BMEII0861 (302 aa).

The disordered stretch occupies residues 1–22; sequence MRSSIHASRLRKMGQSIPASTG. Helical transmembrane passes span 38 to 58, 101 to 121, 147 to 167, 230 to 250, and 268 to 288; these read IFGL…PLWL, LLVA…IGAI, IFLL…VVVI, ILLE…AASW, and WQWL…NFIG. Residues 97–288 enclose the ABC transmembrane type-1 domain; it reads GRISLLVAVS…LAVLAINFIG (192 aa).

It belongs to the binding-protein-dependent transport system permease family. In terms of assembly, the complex is composed of two ATP-binding proteins (BMEII0863 and BMEII0864), two transmembrane proteins (BMEII0860 and BMEII0861) and a solute-binding protein (BMEII0859).

It is found in the cell inner membrane. Functionally, probably part of an ABC transporter complex that could be involved in peptide import. Probably responsible for the translocation of the substrate across the membrane. The sequence is that of Putative peptide permease protein BMEII0861 from Brucella melitensis biotype 1 (strain ATCC 23456 / CCUG 17765 / NCTC 10094 / 16M).